A 366-amino-acid polypeptide reads, in one-letter code: Neutral protease 2 homolog MGYG_04094 (366 aa).

The N-terminal stretch at 1-19 (MQILAALSAIGALVATATA) is a signal peptide. Positions 20–188 (AAVPNAPAKQ…NKSRSTIDKR (169 aa)) are excised as a propeptide. Intrachain disulfides connect Cys196-Cys267 and Cys274-Cys292. Residue His317 coordinates Zn(2+). The active site involves Glu318. Zn(2+) contacts are provided by His321 and Asp332.

This sequence belongs to the peptidase M35 family. Requires Zn(2+) as cofactor.

It is found in the secreted. It carries out the reaction Preferential cleavage of bonds with hydrophobic residues in P1'. Also 3-Asn-|-Gln-4 and 8-Gly-|-Ser-9 bonds in insulin B chain.. Its function is as follows. Secreted metalloproteinase that allows assimilation of proteinaceous substrates. Shows high activities on basic nuclear substrates such as histone and protamine. May be involved in virulence. The chain is Neutral protease 2 homolog MGYG_04094 from Arthroderma gypseum (strain ATCC MYA-4604 / CBS 118893) (Microsporum gypseum).